A 122-amino-acid polypeptide reads, in one-letter code: MALKIRLARGGSKKRPYYHVVLADARSPRDGRFLENLGSWNPMLAKDDEKRVQLNAERIKHWLDNGAQPTDRVLRFLNEAGVAKREAKNNPIKAKPGKRAQERAAEKAQKAADAAAAADAAE.

Residues 85–122 form a disordered region; it reads REAKNNPIKAKPGKRAQERAAEKAQKAADAAAAADAAE. The segment covering 99-110 has biased composition (basic and acidic residues); sequence RAQERAAEKAQK. Positions 111–122 are enriched in low complexity; it reads AADAAAAADAAE.

It belongs to the bacterial ribosomal protein bS16 family.

In Rhizobium etli (strain ATCC 51251 / DSM 11541 / JCM 21823 / NBRC 15573 / CFN 42), this protein is Small ribosomal subunit protein bS16.